Here is a 275-residue protein sequence, read N- to C-terminus: MASVTFRDGFLCVSALITFVFVFVTGADFVRFVSFRAINHNLSGAAPLCRDSVPWSVALRDGVVQKAVAVDVLLLVVFSLQHSLLAWTPVKRVCQSVFGVLSRSVYCFTTAAALQILMHYWRPVTSAPCLWSVSSAPWEIWFPLICFIVHFLCWAIICSILLIFDYPELLGIKQVYYECLGLGDPLLLKSERAQRLYSHLRHPVCVELLTVLWLLPSFPLDRLLLAVFLTVYLILAHSLDKQDCAYLRHQLRNKLQLFSTPLEGSEQTNDNNKLE.

Over 1–4 (MASV) the chain is Nuclear. Residues 5–32 (TFRDGFLCVSALITFVFVFVTGADFVRF) traverse the membrane as a helical segment. Over 33 to 63 (VSFRAINHNLSGAAPLCRDSVPWSVALRDGV) the chain is Perinuclear space. A helical membrane pass occupies residues 64 to 85 (VQKAVAVDVLLLVVFSLQHSLL). The Nuclear segment spans residues 86-102 (AWTPVKRVCQSVFGVLS). The chain crosses the membrane as a helical span at residues 103-119 (RSVYCFTTAAALQILMH). Residues 120–138 (YWRPVTSAPCLWSVSSAPW) lie on the Perinuclear space side of the membrane. Residues 139–169 (EIWFPLICFIVHFLCWAIICSILLIFDYPEL) form a helical membrane-spanning segment. Residues 170-196 (LGIKQVYYECLGLGDPLLLKSERAQRL) lie on the Nuclear side of the membrane. A helical membrane pass occupies residues 197–215 (YSHLRHPVCVELLTVLWLL). At 216–221 (PSFPLD) the chain is on the perinuclear space side. Residues 222-239 (RLLLAVFLTVYLILAHSL) traverse the membrane as a helical segment. At 240-275 (DKQDCAYLRHQLRNKLQLFSTPLEGSEQTNDNNKLE) the chain is on the nuclear side.

This sequence belongs to the nurim family.

It is found in the nucleus inner membrane. This chain is Nurim (nrm), found in Danio rerio (Zebrafish).